Reading from the N-terminus, the 218-residue chain is Small ribosomal subunit protein uS5 (218 aa).

An S5 DRBM domain is found at 55–118; it reads LDHEVIDVSI…RNAKLNIIPV (64 aa).

The protein belongs to the universal ribosomal protein uS5 family. As to quaternary structure, part of the 30S ribosomal subunit. Contacts protein S4.

With S4 and S12 plays an important role in translational accuracy. In Aeropyrum pernix (strain ATCC 700893 / DSM 11879 / JCM 9820 / NBRC 100138 / K1), this protein is Small ribosomal subunit protein uS5.